The following is a 30-amino-acid chain: AYPGNGVHCGKYSCTVDKQTAIGNIGNNAA.

Cysteine 9 and cysteine 14 are joined by a disulfide.

It is found in the secreted. Its function is as follows. Has antibacterial activity against the Gram-positive bacterium L.monocytogenes. The polypeptide is Bacteriocin curvaticin (Latilactobacillus curvatus (Lactobacillus curvatus)).